The chain runs to 539 residues: M protein, serotype 24 (539 aa).

An N-terminal signal peptide occupies residues Met1 to Ala42. Residues Leu118–Ala152 form an A-1 repeat. The segment at Leu118–Glu301 is 5.3 X 35 AA tandem repeats, A-type. The stretch at Leu153–Ala187 is one A-2 repeat. An A-3 repeat occupies Leu188–Ala222. An A-4 repeat occupies Leu223 to Ala257. An A-5 repeat occupies Leu258–Ala292. The stretch at Leu293 to Lys297 is one A-6; truncated repeat. The tract at residues Lys297–Ala401 is disordered. C repeat units lie at residues Ala298–His332, Gln333–His367, and Gln368–Leu402. Polar residues predominate over residues Gln303–Gln312. Basic and acidic residues-rich tracts occupy residues Leu314 to Lys340, Leu349 to Lys375, and Leu384 to Ala401. D repeat units follow at residues Ala435–Glu440, Ala441–Glu446, Ala449–Glu454, and Ala456–Gly461. The segment at Ala456–Thr511 is disordered. Positions Leu505–Gly509 match the LPXTG sorting signal motif. Thr508 carries the post-translational modification Pentaglycyl murein peptidoglycan amidated threonine. Positions Gly509–Asn539 are cleaved as a propeptide — removed by sortase.

It belongs to the M protein family.

The protein resides in the secreted. Its subcellular location is the cell wall. This protein is one of the different antigenic serotypes of protein M. Protein M is closely associated with virulence of the bacterium and can render the organism resistant to phagocytosis. This Streptococcus pyogenes protein is M protein, serotype 24 (emm24).